We begin with the raw amino-acid sequence, 229 residues long: Heptaprenylglyceryl phosphate synthase (229 aa).

Lys12 contacts sn-glycerol 1-phosphate. Mg(2+)-binding residues include Asp14 and Ser40. Sn-glycerol 1-phosphate-binding positions include 159 to 164 (YLEYSG), Gly189, and 209 to 210 (GN).

It belongs to the GGGP/HepGP synthase family. Group I subfamily. Homodimer. It depends on Mg(2+) as a cofactor.

The catalysed reaction is sn-glycerol 1-phosphate + all-trans-heptaprenyl diphosphate = 3-heptaprenyl-sn-glycero-1-phosphate + diphosphate. Its pathway is membrane lipid metabolism; glycerophospholipid metabolism. Prenyltransferase that catalyzes in vivo the transfer of the heptaprenyl moiety of heptaprenyl pyrophosphate (HepPP; 35 carbon atoms) to the C3 hydroxyl of sn-glycerol-1-phosphate (G1P), producing heptaprenylglyceryl phosphate (HepGP). This reaction is an ether-bond-formation step in the biosynthesis of archaea-type G1P-based membrane lipids found in Bacillales. This is Heptaprenylglyceryl phosphate synthase from Bacillus thuringiensis (strain Al Hakam).